Reading from the N-terminus, the 321-residue chain is Ras association domain-containing protein 4 (321 aa).

Residues 79–159 (HLPSTSWMPR…RPKCRAPGEA (81 aa)) form a disordered region. Positions 98 to 110 (SPQNGNITAQGPS) are enriched in polar residues. Ser141 carries the post-translational modification Phosphoserine. The region spanning 174–262 (YNHKTSVFTP…ARIFLMEADL (89 aa)) is the Ras-associating domain. Residues 270–317 (VAQYIKFEMPVLDSFVEKLKEEEEREIIKLTMKFQALRLTMLQRLEQL) form the SARAH domain.

As to quaternary structure, interacts directly with activated KRAS in a GTP-dependent manner. In terms of tissue distribution, widely expressed. Frequently down-regulated in tumor cell lines.

In terms of biological role, potential tumor suppressor. May act as a KRAS effector protein. May promote apoptosis and cell cycle arrest. The chain is Ras association domain-containing protein 4 (RASSF4) from Homo sapiens (Human).